A 296-amino-acid chain; its full sequence is Phosphoribosylaminoimidazole-succinocarboxamide synthase (296 aa).

It belongs to the SAICAR synthetase family.

The enzyme catalyses 5-amino-1-(5-phospho-D-ribosyl)imidazole-4-carboxylate + L-aspartate + ATP = (2S)-2-[5-amino-1-(5-phospho-beta-D-ribosyl)imidazole-4-carboxamido]succinate + ADP + phosphate + 2 H(+). It participates in purine metabolism; IMP biosynthesis via de novo pathway; 5-amino-1-(5-phospho-D-ribosyl)imidazole-4-carboxamide from 5-amino-1-(5-phospho-D-ribosyl)imidazole-4-carboxylate: step 1/2. The sequence is that of Phosphoribosylaminoimidazole-succinocarboxamide synthase from Syntrophotalea carbinolica (strain DSM 2380 / NBRC 103641 / GraBd1) (Pelobacter carbinolicus).